Consider the following 365-residue polypeptide: MTENHYLLLTPGPLTTTKTVKEVMLYDWCTWDVEYNTMVQKVRAKLVSLATKEEEKYTTVLMQGSGTFSVEAVIGSVIPKNGKLLVCTNGAYGKRIVQMAEMLHIDVVVSQTEEWEPTNIVEVEKILQQDKEITHIAVVHCETTTGIINPIVDVCKLGKQYGKVTLVDAMSSFGGIEIDIAELQIDFLISSANKCIQGVPGFGFVIAQRDELLKCKGQARSLSLDLYDQWETMENQNGKWRFTSPTHVVHAFYQALLELEKEGGVRARYNRYYNNQKLLVNRMGEIGFKPLVNEKYQSPIITSFIYPEGNFEFQQLYNELKRYGFVIYPGKISKVDTFRIGNIGDVHEEDINRLVDSIAKGVVIG.

The residue at position 194 (K194) is an N6-(pyridoxal phosphate)lysine.

It belongs to the class-V pyridoxal-phosphate-dependent aminotransferase family. PhnW subfamily. As to quaternary structure, homodimer. Pyridoxal 5'-phosphate is required as a cofactor.

The catalysed reaction is (2-aminoethyl)phosphonate + pyruvate = phosphonoacetaldehyde + L-alanine. Functionally, involved in phosphonate degradation. The chain is 2-aminoethylphosphonate--pyruvate transaminase from Bacillus thuringiensis subsp. konkukian (strain 97-27).